A 291-amino-acid chain; its full sequence is Phosphate import ATP-binding protein PstB (291 aa).

Residues 1–21 (MANKQIIDKNDDLQAHTDRND) form a disordered region. In terms of domain architecture, ABC transporter spans 45-286 (YSTKNLDLWY…PSDKQTEDYI (242 aa)). 77–84 (GPSGCGKS) contributes to the ATP binding site.

This sequence belongs to the ABC transporter superfamily. Phosphate importer (TC 3.A.1.7) family. The complex is composed of two ATP-binding proteins (PstB), two transmembrane proteins (PstC and PstA) and a solute-binding protein (PstS).

It is found in the cell membrane. The enzyme catalyses phosphate(out) + ATP + H2O = ADP + 2 phosphate(in) + H(+). Functionally, part of the ABC transporter complex PstSACB involved in phosphate import. Responsible for energy coupling to the transport system. This is Phosphate import ATP-binding protein PstB from Staphylococcus saprophyticus subsp. saprophyticus (strain ATCC 15305 / DSM 20229 / NCIMB 8711 / NCTC 7292 / S-41).